The following is a 79-amino-acid chain: MENLSVDLLYMAAALMMGLAAIGAAIGIGILGGKFLEGAARQPDLIPLLRTQFFIVMGLVDAIPMIAVGLGLYVMFAVA.

2 consecutive transmembrane segments (helical) span residues 11 to 31 (MAAALMMGLAAIGAAIGIGIL) and 53 to 73 (FFIVMGLVDAIPMIAVGLGLY).

It belongs to the ATPase C chain family. F-type ATPases have 2 components, F(1) - the catalytic core - and F(0) - the membrane proton channel. F(1) has five subunits: alpha(3), beta(3), gamma(1), delta(1), epsilon(1). F(0) has three main subunits: a(1), b(2) and c(10-14). The alpha and beta chains form an alternating ring which encloses part of the gamma chain. F(1) is attached to F(0) by a central stalk formed by the gamma and epsilon chains, while a peripheral stalk is formed by the delta and b chains.

The protein localises to the cell inner membrane. Functionally, f(1)F(0) ATP synthase produces ATP from ADP in the presence of a proton or sodium gradient. F-type ATPases consist of two structural domains, F(1) containing the extramembraneous catalytic core and F(0) containing the membrane proton channel, linked together by a central stalk and a peripheral stalk. During catalysis, ATP synthesis in the catalytic domain of F(1) is coupled via a rotary mechanism of the central stalk subunits to proton translocation. In terms of biological role, key component of the F(0) channel; it plays a direct role in translocation across the membrane. A homomeric c-ring of between 10-14 subunits forms the central stalk rotor element with the F(1) delta and epsilon subunits. This chain is ATP synthase subunit c, found in Pectobacterium atrosepticum (strain SCRI 1043 / ATCC BAA-672) (Erwinia carotovora subsp. atroseptica).